A 124-amino-acid chain; its full sequence is Acidic phospholipase A2 (124 aa).

Intrachain disulfides connect Cys26–Cys116, Cys28–Cys44, Cys43–Cys95, Cys49–Cys124, Cys50–Cys88, Cys57–Cys81, and Cys75–Cys86. Positions 27, 29, and 31 each coordinate Ca(2+). His47 is a catalytic residue. Asp48 lines the Ca(2+) pocket. Residue Asp89 is part of the active site.

It belongs to the phospholipase A2 family. Group II subfamily. D49 sub-subfamily. It depends on Ca(2+) as a cofactor. As to expression, expressed by the venom gland.

The protein resides in the secreted. The catalysed reaction is a 1,2-diacyl-sn-glycero-3-phosphocholine + H2O = a 1-acyl-sn-glycero-3-phosphocholine + a fatty acid + H(+). In terms of biological role, snake venom phospholipase A2 (PLA2) that inhibits ADP-induced platelet aggregation. PLA2 catalyzes the calcium-dependent hydrolysis of the 2-acyl groups in 3-sn-phosphoglycerides. This Gloydius ussuriensis (Ussuri mamushi) protein is Acidic phospholipase A2.